Reading from the N-terminus, the 417-residue chain is Peptidyl-Asp metalloendopeptidase (417 aa).

The first 23 residues, 1–23, serve as a signal peptide directing secretion; it reads MKSKSMCTTVGLIAMCLAGSAAA. Position 331 (histidine 331) interacts with Zn(2+). Glutamate 332 is a catalytic residue. Residues histidine 335 and histidine 341 each contribute to the Zn(2+) site.

This sequence belongs to the peptidase M72 family. It depends on Zn(2+) as a cofactor.

The catalysed reaction is Cleavage of Xaa-|-Asp, Xaa-|-Glu and Xaa-|-cysteic acid bonds.. Functionally, metalloprotease, specifically cleaves on the N-terminal side of aspartyl, glutamyl and cysteic acid residues. The polypeptide is Peptidyl-Asp metalloendopeptidase (Xanthomonas campestris pv. campestris (strain ATCC 33913 / DSM 3586 / NCPPB 528 / LMG 568 / P 25)).